A 257-amino-acid polypeptide reads, in one-letter code: Photosystem I chlorophyll a/b-binding protein 2, chloroplastic (257 aa).

The transit peptide at 1 to 43 (MASSLCASSAIAAISSPSFLGGKKLRLKKKLTVPAVSRPDASV) directs the protein to the chloroplast. Tryptophan 55 provides a ligand contact to chlorophyll b. Residues phenylalanine 75, serine 81, and glutamate 94 each coordinate chlorophyll a. A chlorophyll b-binding site is contributed by arginine 99. A run of 2 helical transmembrane segments spans residues 100–120 (WAMLGAAGIFIPEFLTKIGIL) and 133–153 (YFTDKTTLFVVELILIGWAEG). Chlorophyll b is bound by residues glutamate 152 and arginine 155. Chlorophyll a-binding residues include lysine 208, glutamate 209, asparagine 212, arginine 214, glutamine 226, and histidine 241. A helical transmembrane segment spans residues 215–235 (LAMLAVMGAWFQHIYTGTGPI).

Belongs to the light-harvesting chlorophyll a/b-binding (LHC) protein family. The LHC complex consists of chlorophyll a-b binding proteins. Red-emitting heterodimers with LHCA3 and LHCA5. Binds to carotenoids. Binds at least 14 chlorophylls (8 Chl-a and 6 Chl-b) and carotenoids such as lutein and neoxanthin. serves as cofactor. Post-translationally, photoregulated by reversible phosphorylation of its threonine residues.

The protein resides in the plastid. The protein localises to the chloroplast thylakoid membrane. Functionally, the light-harvesting complex (LHC) functions as a light receptor, it captures and delivers excitation energy to photosystems with which it is closely associated, here photosystem I. This is Photosystem I chlorophyll a/b-binding protein 2, chloroplastic from Arabidopsis thaliana (Mouse-ear cress).